The sequence spans 451 residues: UPF0210 protein NGO_1297 (451 aa).

This sequence belongs to the UPF0210 family. Homodimer.

The chain is UPF0210 protein NGO_1297 from Neisseria gonorrhoeae (strain ATCC 700825 / FA 1090).